A 691-amino-acid polypeptide reads, in one-letter code: DNA ligase (691 aa).

Residues 41–45 (DAEYD), 90–91 (SL), and E130 each bind NAD(+). Catalysis depends on K132, which acts as the N6-AMP-lysine intermediate. R153, E190, K307, and K331 together coordinate NAD(+). Residues C425, C428, C443, and C449 each coordinate Zn(2+). A BRCT domain is found at 610–691 (APQGVLAGKT…LHQLLEGNTP (82 aa)).

Belongs to the NAD-dependent DNA ligase family. LigA subfamily. It depends on Mg(2+) as a cofactor. Requires Mn(2+) as cofactor.

It catalyses the reaction NAD(+) + (deoxyribonucleotide)n-3'-hydroxyl + 5'-phospho-(deoxyribonucleotide)m = (deoxyribonucleotide)n+m + AMP + beta-nicotinamide D-nucleotide.. DNA ligase that catalyzes the formation of phosphodiester linkages between 5'-phosphoryl and 3'-hydroxyl groups in double-stranded DNA using NAD as a coenzyme and as the energy source for the reaction. It is essential for DNA replication and repair of damaged DNA. The chain is DNA ligase from Burkholderia cenocepacia (strain ATCC BAA-245 / DSM 16553 / LMG 16656 / NCTC 13227 / J2315 / CF5610) (Burkholderia cepacia (strain J2315)).